We begin with the raw amino-acid sequence, 253 residues long: Ciliary microtubule associated protein 1B (253 aa).

One copy of the STPGR repeat lies at 182–207 (PGPCAYQVVSPGVYKSRAPQFTILAR).

Belongs to the CIMAP family.

It localises to the cell projection. It is found in the cilium. The protein resides in the flagellum. The protein is Ciliary microtubule associated protein 1B of Homo sapiens (Human).